A 649-amino-acid chain; its full sequence is tRNA-guanine(15) transglycosylase (649 aa).

Asp88 functions as the Nucleophile in the catalytic mechanism. Asp123 and Ala194 together coordinate substrate. Zn(2+) is bound by residues Cys280, Cys282, and Cys285. In terms of domain architecture, PUA spans 573–648 (KYRIVIDSSV…VAATLRGGLK (76 aa)).

It belongs to the archaeosine tRNA-ribosyltransferase family. Zn(2+) is required as a cofactor.

It catalyses the reaction guanosine(15) in tRNA + 7-cyano-7-deazaguanine = 7-cyano-7-carbaguanosine(15) in tRNA + guanine. The protein operates within tRNA modification; archaeosine-tRNA biosynthesis. Its function is as follows. Exchanges the guanine residue with 7-cyano-7-deazaguanine (preQ0) at position 15 in the dihydrouridine loop (D-loop) of archaeal tRNAs. This is tRNA-guanine(15) transglycosylase from Methanococcus maripaludis (strain C6 / ATCC BAA-1332).